A 488-amino-acid polypeptide reads, in one-letter code: ATP synthase subunit beta (488 aa).

164 to 171 is a binding site for ATP; that stretch reads GGAGVGKT.

The protein belongs to the ATPase alpha/beta chains family. In terms of assembly, F-type ATPases have 2 components, CF(1) - the catalytic core - and CF(0) - the membrane proton channel. CF(1) has five subunits: alpha(3), beta(3), gamma(1), delta(1), epsilon(1). CF(0) has four main subunits: a(1), b(1), b'(1) and c(9-12).

The protein resides in the cellular thylakoid membrane. It carries out the reaction ATP + H2O + 4 H(+)(in) = ADP + phosphate + 5 H(+)(out). Its function is as follows. Produces ATP from ADP in the presence of a proton gradient across the membrane. The catalytic sites are hosted primarily by the beta subunits. The sequence is that of ATP synthase subunit beta from Prochlorococcus marinus (strain MIT 9211).